The chain runs to 787 residues: Integrin beta-6 (787 aa).

Positions 1-21 (MGIELVCLFLLLLGRNDHVQG) are cleaved as a signal peptide. The 50-residue stretch at 22-71 (GCAWSGAETCSDCLLTGPHCAWCSQENFTHLSGAGERCDTPENLLAKGCQ) folds into the PSI domain. Over 22-708 (GCAWSGAETC…KDCPKPPNIP (687 aa)) the chain is Extracellular. 19 disulfide bridges follow: Cys-23-Cys-41, Cys-31-Cys-454, Cys-34-Cys-59, Cys-44-Cys-70, Cys-197-Cys-204, Cys-252-Cys-293, Cys-394-Cys-406, Cys-426-Cys-452, Cys-456-Cys-476, Cys-467-Cys-479, Cys-481-Cys-490, Cys-492-Cys-519, Cys-502-Cys-517, Cys-511-Cys-522, Cys-524-Cys-537, Cys-539-Cys-560, Cys-544-Cys-558, Cys-552-Cys-563, and Cys-565-Cys-574. Residues Asn-48 and Asn-97 are each glycosylated (N-linked (GlcNAc...) asparagine). Residues 131–371 (YPVDLYYLMD…QLIISAYEEL (241 aa)) form the VWFA domain. Residues Asp-140, Ser-142, and Ser-144 each coordinate Mg(2+). Residues Ser-144, Asp-147, Asp-148, and Glu-179 each coordinate Ca(2+). Ca(2+) contacts are provided by Asn-235, Asp-237, Pro-239, and Glu-240. Mg(2+) is bound at residue Glu-240. The N-linked (GlcNAc...) asparagine glycan is linked to Asn-260. Ca(2+) is bound by residues Asp-271 and Lys-355. An N-linked (GlcNAc...) asparagine glycan is attached at Asn-387. N-linked (GlcNAc...) asparagine glycosylation occurs at Asn-418. I-EGF domains follow at residues 456–491 (CQRE…PRCE), 492–538 (CGED…PYCQ), 539–575 (CDNF…EYCN), and 576–615 (CTTS…PTCE). 2 N-linked (GlcNAc...) asparagine glycosylation sites follow: Asn-463 and Asn-471. Asn-541 carries N-linked (GlcNAc...) asparagine glycosylation. An N-linked (GlcNAc...) asparagine glycan is attached at Asn-575. 9 disulfides stabilise this stretch: Cys-576–Cys-599, Cys-583–Cys-597, Cys-591–Cys-602, Cys-604–Cys-614, Cys-617–Cys-620, Cys-624–Cys-669, Cys-630–Cys-649, Cys-633–Cys-645, and Cys-677–Cys-701. Asn-695 is a glycosylation site (N-linked (GlcNAc...) asparagine). A helical membrane pass occupies residues 709-729 (MIMLGVSLAILLIGVVLLCIW). Residues 730 to 757 (KLLVSFHDRKEVAKFEAERSKAKWQTGT) are interaction with HAX1. Topologically, residues 730 to 787 (KLLVSFHDRKEVAKFEAERSKAKWQTGTNPLYRGSTSTFKNVTYKHREKHKVGLSSDG) are cytoplasmic.

Belongs to the integrin beta chain family. In terms of assembly, heterodimer of an alpha and a beta subunit. Interacts with FLNB. Interacts with HAX1. ITGAV:ITGB6 interacts with FBN1. ITGAV:ITGB6 interacts with TGFB1.

The protein localises to the cell membrane. It is found in the cell junction. It localises to the focal adhesion. Its function is as follows. Integrin alpha-V:beta-6 (ITGAV:ITGB6) is a receptor for fibronectin and cytotactin. It recognizes the sequence R-G-D in its ligands. ITGAV:ITGB6 acts as a receptor for fibrillin-1 (FBN1) and mediates R-G-D-dependent cell adhesion to FBN1. Integrin alpha-V:beta-6 (ITGAV:ITGB6) mediates R-G-D-dependent release of transforming growth factor beta-1 (TGF-beta-1) from regulatory Latency-associated peptide (LAP), thereby playing a key role in TGF-beta-1 activation. This chain is Integrin beta-6 (Itgb6), found in Rattus norvegicus (Rat).